Consider the following 488-residue polypeptide: Glutamyl-tRNA(Gln) amidotransferase subunit A (488 aa).

Active-site charge relay system residues include Lys-78 and Ser-153. Ser-177 functions as the Acyl-ester intermediate in the catalytic mechanism.

This sequence belongs to the amidase family. GatA subfamily. Heterotrimer of A, B and C subunits.

It catalyses the reaction L-glutamyl-tRNA(Gln) + L-glutamine + ATP + H2O = L-glutaminyl-tRNA(Gln) + L-glutamate + ADP + phosphate + H(+). In terms of biological role, allows the formation of correctly charged Gln-tRNA(Gln) through the transamidation of misacylated Glu-tRNA(Gln) in organisms which lack glutaminyl-tRNA synthetase. The reaction takes place in the presence of glutamine and ATP through an activated gamma-phospho-Glu-tRNA(Gln). This Solidesulfovibrio magneticus (strain ATCC 700980 / DSM 13731 / RS-1) (Desulfovibrio magneticus) protein is Glutamyl-tRNA(Gln) amidotransferase subunit A.